Consider the following 228-residue polypeptide: 7-cyano-7-deazaguanine synthase (228 aa).

An ATP-binding site is contributed by Leu-8–Leu-18. Zn(2+) is bound by residues Cys-188, Cys-198, Cys-201, and Cys-204.

The protein belongs to the QueC family. It depends on Zn(2+) as a cofactor.

It catalyses the reaction 7-carboxy-7-deazaguanine + NH4(+) + ATP = 7-cyano-7-deazaguanine + ADP + phosphate + H2O + H(+). It functions in the pathway purine metabolism; 7-cyano-7-deazaguanine biosynthesis. Functionally, catalyzes the ATP-dependent conversion of 7-carboxy-7-deazaguanine (CDG) to 7-cyano-7-deazaguanine (preQ(0)). This Legionella pneumophila (strain Corby) protein is 7-cyano-7-deazaguanine synthase.